We begin with the raw amino-acid sequence, 82 residues long: uncharacterized protein (82 aa).

A compositionally biased stretch (low complexity) spans 29-38 (TATKSTSSGS). The interval 29–64 (TATKSTSSGSVPSFFTESTSTPLNQSKTNTSTLNKS) is disordered. A compositionally biased stretch (polar residues) spans 39–50 (VPSFFTESTSTP). The span at 51-64 (LNQSKTNTSTLNKS) shows a compositional bias: low complexity.

This is an uncharacterized protein from Dictyostelium discoideum (Social amoeba).